The chain runs to 466 residues: UDP-N-acetylmuramate--L-alanine ligase (466 aa).

An ATP-binding site is contributed by 114 to 120 (GTHGKTT).

The protein belongs to the MurCDEF family.

It is found in the cytoplasm. It catalyses the reaction UDP-N-acetyl-alpha-D-muramate + L-alanine + ATP = UDP-N-acetyl-alpha-D-muramoyl-L-alanine + ADP + phosphate + H(+). It participates in cell wall biogenesis; peptidoglycan biosynthesis. Cell wall formation. The sequence is that of UDP-N-acetylmuramate--L-alanine ligase from Chlorobium phaeobacteroides (strain DSM 266 / SMG 266 / 2430).